Reading from the N-terminus, the 177-residue chain is Inorganic pyrophosphatase (177 aa).

Positions 29, 43, and 55 each coordinate substrate. Positions 65, 70, and 102 each coordinate Mg(2+). Tyr-141 serves as a coordination point for substrate.

Belongs to the PPase family. Homohexamer. It depends on Mg(2+) as a cofactor.

It is found in the cytoplasm. The catalysed reaction is diphosphate + H2O = 2 phosphate + H(+). Functionally, catalyzes the hydrolysis of inorganic pyrophosphate (PPi) forming two phosphate ions. The protein is Inorganic pyrophosphatase of Aquifex pyrophilus.